Here is a 125-residue protein sequence, read N- to C-terminus: Anticoagulant salivary protein 14 (125 aa).

A signal peptide spans 1–21 (MGLTGTMLVLVSLAFFGSAAA). Asparagine 26, asparagine 81, and asparagine 87 each carry an N-linked (GlcNAc...) asparagine glycan. The span at 75–86 (GECHLTNNSGGP) shows a compositional bias: polar residues. Positions 75 to 125 (GECHLTNNSGGPNETDDYTPAPTEKPKQKKKKTKKTKKPKRKSKKDQEKNL) are disordered. Residues 91–125 (DYTPAPTEKPKQKKKKTKKTKKPKRKSKKDQEKNL) form a responsible for anticoagulant activity region. The span at 101 to 118 (KQKKKKTKKTKKPKRKSK) shows a compositional bias: basic residues.

Belongs to the salp14 family. As to expression, salivary gland (at protein level). Saliva (at protein level).

The protein resides in the secreted. Functionally, salivary anticoagulant protein that facilitates blood feeding of adult ticks on vertebrate species. Inhibits host coagulation factor Xa (F10). Blocks the assembly and/or early activity of the prothrombinase complex (Xa-Va/F10-F5). Inhibits the lectin pathway of complement system activation in the host. This Ixodes scapularis (Black-legged tick) protein is Anticoagulant salivary protein 14.